Consider the following 231-residue polypeptide: 7-cyano-7-deazaguanine synthase (231 aa).

Residue 8-18 coordinates ATP; it reads FSGGQDSTTCL. Zn(2+) is bound by residues cysteine 188, cysteine 197, cysteine 200, and cysteine 203.

It belongs to the QueC family. The cofactor is Zn(2+).

It carries out the reaction 7-carboxy-7-deazaguanine + NH4(+) + ATP = 7-cyano-7-deazaguanine + ADP + phosphate + H2O + H(+). Its pathway is purine metabolism; 7-cyano-7-deazaguanine biosynthesis. Catalyzes the ATP-dependent conversion of 7-carboxy-7-deazaguanine (CDG) to 7-cyano-7-deazaguanine (preQ(0)). The chain is 7-cyano-7-deazaguanine synthase from Shigella flexneri serotype 5b (strain 8401).